The chain runs to 350 residues: Ion-translocating oxidoreductase complex subunit D (350 aa).

A run of 3 helical transmembrane segments spans residues 25–45 (ILCALPGVAVQCFFFGWGTVI), 89–109 (IPPLAPWWVTVIGTLFAIVIV), and 129–149 (VMLLISFPVQMTSWVAPSVIA). Thr185 is modified (FMN phosphoryl threonine). The next 5 helical transmembrane spans lie at 212–232 (GFGVGWFWVNLAYLAGGLVML), 239–259 (WHITAGILAALFICSGVGYLL), 264–284 (FTGPLLHLFSGATMLAAFFIA), 298–318 (LVFGALIGILVYIIRTFGGYP), and 319–339 (DAFAFAILLANLCAPFIDHYM).

This sequence belongs to the NqrB/RnfD family. The complex is composed of six subunits: RnfA, RnfB, RnfC, RnfD, RnfE and RnfG. FMN serves as cofactor.

It is found in the cell inner membrane. Part of a membrane-bound complex that couples electron transfer with translocation of ions across the membrane. The protein is Ion-translocating oxidoreductase complex subunit D of Shewanella sediminis (strain HAW-EB3).